We begin with the raw amino-acid sequence, 217 residues long: Ribonuclease HII (217 aa).

An RNase H type-2 domain is found at 27–216 (RTIAGIDEAG…VREHLGESRC (190 aa)). Asp33, Glu34, and Asp125 together coordinate a divalent metal cation.

It belongs to the RNase HII family. Mn(2+) is required as a cofactor. It depends on Mg(2+) as a cofactor.

It localises to the cytoplasm. The catalysed reaction is Endonucleolytic cleavage to 5'-phosphomonoester.. In terms of biological role, endonuclease that specifically degrades the RNA of RNA-DNA hybrids. This Geobacter sulfurreducens (strain ATCC 51573 / DSM 12127 / PCA) protein is Ribonuclease HII.